Reading from the N-terminus, the 310-residue chain is Putative S-adenosyl-L-methionine-dependent methyltransferase ML2640 (310 aa).

S-adenosyl-L-methionine is bound by residues D132 and 161 to 162 (DL).

Belongs to the UPF0677 family.

Its function is as follows. Exhibits S-adenosyl-L-methionine-dependent methyltransferase activity. The polypeptide is Putative S-adenosyl-L-methionine-dependent methyltransferase ML2640 (Mycobacterium leprae (strain TN)).